The sequence spans 579 residues: ATP-dependent lipid A-core flippase (579 aa).

Helical transmembrane passes span 24–44 (FALS…LPAL), 63–83 (WVPL…FIST), 150–170 (VLGL…IVFA), 251–271 (VIQF…AGQA), and 275–295 (TTTV…FAPL). The 283-residue stretch at 25-307 (ALSIVGLILT…LTAVNDQLQR (283 aa)) folds into the ABC transmembrane type-1 domain. The ABC transporter domain occupies 339-575 (LAFRDVGLTY…QGRYAQLHAL (237 aa)). Residue 373-380 (GASGSGKT) coordinates ATP.

This sequence belongs to the ABC transporter superfamily. Lipid exporter (TC 3.A.1.106) family. Homodimer.

It localises to the cell inner membrane. The catalysed reaction is ATP + H2O + lipid A-core oligosaccharideSide 1 = ADP + phosphate + lipid A-core oligosaccharideSide 2.. Involved in lipopolysaccharide (LPS) biosynthesis. Translocates lipid A-core from the inner to the outer leaflet of the inner membrane. Transmembrane domains (TMD) form a pore in the inner membrane and the ATP-binding domain (NBD) is responsible for energy generation. The protein is ATP-dependent lipid A-core flippase of Thiobacillus denitrificans (strain ATCC 25259 / T1).